The primary structure comprises 479 residues: Aspartyl/glutamyl-tRNA(Asn/Gln) amidotransferase subunit B (479 aa).

The protein belongs to the GatB/GatE family. GatB subfamily. As to quaternary structure, heterotrimer of A, B and C subunits.

It carries out the reaction L-glutamyl-tRNA(Gln) + L-glutamine + ATP + H2O = L-glutaminyl-tRNA(Gln) + L-glutamate + ADP + phosphate + H(+). The catalysed reaction is L-aspartyl-tRNA(Asn) + L-glutamine + ATP + H2O = L-asparaginyl-tRNA(Asn) + L-glutamate + ADP + phosphate + 2 H(+). In terms of biological role, allows the formation of correctly charged Asn-tRNA(Asn) or Gln-tRNA(Gln) through the transamidation of misacylated Asp-tRNA(Asn) or Glu-tRNA(Gln) in organisms which lack either or both of asparaginyl-tRNA or glutaminyl-tRNA synthetases. The reaction takes place in the presence of glutamine and ATP through an activated phospho-Asp-tRNA(Asn) or phospho-Glu-tRNA(Gln). In Halorhodospira halophila (strain DSM 244 / SL1) (Ectothiorhodospira halophila (strain DSM 244 / SL1)), this protein is Aspartyl/glutamyl-tRNA(Asn/Gln) amidotransferase subunit B.